Here is a 1049-residue protein sequence, read N- to C-terminus: Carbamoyl phosphate synthase large chain (1049 aa).

A carboxyphosphate synthetic domain region spans residues 1-399 (MRESVRKVLV…SLQKAVRMLD (399 aa)). Arg127, Arg167, Gly173, Gly174, Lys206, Leu208, Glu213, Gly239, Val240, His241, Gln282, and Glu296 together coordinate ATP. An ATP-grasp 1 domain is found at 131 to 325 (RETMINVGLP…LAYVSAKLAL (195 aa)). Positions 282, 296, and 298 each coordinate Mg(2+). The Mn(2+) site is built by Gln282, Glu296, and Asn298. The oligomerization domain stretch occupies residues 400–548 (IGEPGVVGGK…LTYNGTEDDI (149 aa)). The interval 549–930 (EFSEAGNKLL…LKSWLSSSPN (382 aa)) is carbamoyl phosphate synthetic domain. The region spanning 674–864 (SKLLDKLGIK…IISLALDGIL (191 aa)) is the ATP-grasp 2 domain. ATP is bound by residues Arg710, Lys749, Leu751, Glu756, Gly780, Val781, His782, Ser783, Gln823, and Glu835. Residues Gln823, Glu835, and Asn837 each coordinate Mg(2+). 3 residues coordinate Mn(2+): Gln823, Glu835, and Asn837. Residues 930–1049 (NKIPNKEGIA…YEISEYGAGI (120 aa)) form the MGS-like domain. Residues 931–1049 (KIPNKEGIAL…YEISEYGAGI (119 aa)) form an allosteric domain region.

This sequence belongs to the CarB family. Composed of two chains; the small (or glutamine) chain promotes the hydrolysis of glutamine to ammonia, which is used by the large (or ammonia) chain to synthesize carbamoyl phosphate. Tetramer of heterodimers (alpha,beta)4. Requires Mg(2+) as cofactor. It depends on Mn(2+) as a cofactor.

The enzyme catalyses hydrogencarbonate + L-glutamine + 2 ATP + H2O = carbamoyl phosphate + L-glutamate + 2 ADP + phosphate + 2 H(+). It carries out the reaction hydrogencarbonate + NH4(+) + 2 ATP = carbamoyl phosphate + 2 ADP + phosphate + 2 H(+). It functions in the pathway amino-acid biosynthesis; L-arginine biosynthesis; carbamoyl phosphate from bicarbonate: step 1/1. Its pathway is pyrimidine metabolism; UMP biosynthesis via de novo pathway; (S)-dihydroorotate from bicarbonate: step 1/3. Functionally, large subunit of the glutamine-dependent carbamoyl phosphate synthetase (CPSase). CPSase catalyzes the formation of carbamoyl phosphate from the ammonia moiety of glutamine, carbonate, and phosphate donated by ATP, constituting the first step of 2 biosynthetic pathways, one leading to arginine and/or urea and the other to pyrimidine nucleotides. The large subunit (synthetase) binds the substrates ammonia (free or transferred from glutamine from the small subunit), hydrogencarbonate and ATP and carries out an ATP-coupled ligase reaction, activating hydrogencarbonate by forming carboxy phosphate which reacts with ammonia to form carbamoyl phosphate. This chain is Carbamoyl phosphate synthase large chain, found in Sulfurisphaera tokodaii (strain DSM 16993 / JCM 10545 / NBRC 100140 / 7) (Sulfolobus tokodaii).